The sequence spans 833 residues: Leucine--tRNA ligase (833 aa).

The short motif at 41 to 52 is the 'HIGH' region element; sequence PYPSGAGLHVGH. The short motif at 610-614 is the 'KMSKS' region element; the sequence is KMSKS. Lysine 613 is an ATP binding site.

This sequence belongs to the class-I aminoacyl-tRNA synthetase family.

It is found in the cytoplasm. It carries out the reaction tRNA(Leu) + L-leucine + ATP = L-leucyl-tRNA(Leu) + AMP + diphosphate. This is Leucine--tRNA ligase from Streptococcus gordonii (strain Challis / ATCC 35105 / BCRC 15272 / CH1 / DL1 / V288).